Here is a 208-residue protein sequence, read N- to C-terminus: 3-demethoxyubiquinol 3-hydroxylase (208 aa).

6 residues coordinate Fe cation: glutamate 57, glutamate 87, histidine 90, glutamate 139, glutamate 171, and histidine 174.

Belongs to the COQ7 family. Fe cation serves as cofactor.

It localises to the cell membrane. The enzyme catalyses a 5-methoxy-2-methyl-3-(all-trans-polyprenyl)benzene-1,4-diol + AH2 + O2 = a 3-demethylubiquinol + A + H2O. The protein operates within cofactor biosynthesis; ubiquinone biosynthesis. Functionally, catalyzes the hydroxylation of 2-nonaprenyl-3-methyl-6-methoxy-1,4-benzoquinol during ubiquinone biosynthesis. The sequence is that of 3-demethoxyubiquinol 3-hydroxylase from Burkholderia multivorans (strain ATCC 17616 / 249).